The primary structure comprises 435 residues: Serine--tRNA ligase (435 aa).

240-242 (TAE) is an L-serine binding site. 271 to 273 (RSE) is an ATP binding site. Glutamate 294 is an L-serine binding site. 358 to 361 (EISS) is a binding site for ATP. Position 393 (serine 393) interacts with L-serine.

It belongs to the class-II aminoacyl-tRNA synthetase family. Type-1 seryl-tRNA synthetase subfamily. In terms of assembly, homodimer. The tRNA molecule binds across the dimer.

It localises to the cytoplasm. The enzyme catalyses tRNA(Ser) + L-serine + ATP = L-seryl-tRNA(Ser) + AMP + diphosphate + H(+). It catalyses the reaction tRNA(Sec) + L-serine + ATP = L-seryl-tRNA(Sec) + AMP + diphosphate + H(+). Its pathway is aminoacyl-tRNA biosynthesis; selenocysteinyl-tRNA(Sec) biosynthesis; L-seryl-tRNA(Sec) from L-serine and tRNA(Sec): step 1/1. In terms of biological role, catalyzes the attachment of serine to tRNA(Ser). Is also able to aminoacylate tRNA(Sec) with serine, to form the misacylated tRNA L-seryl-tRNA(Sec), which will be further converted into selenocysteinyl-tRNA(Sec). The sequence is that of Serine--tRNA ligase from Cupriavidus metallidurans (strain ATCC 43123 / DSM 2839 / NBRC 102507 / CH34) (Ralstonia metallidurans).